The primary structure comprises 250 residues: 5'-nucleotidase SurE (250 aa).

Residues Asp-8, Asp-9, Ser-40, and Asn-94 each coordinate a divalent metal cation.

Belongs to the SurE nucleotidase family. Requires a divalent metal cation as cofactor.

It localises to the cytoplasm. It catalyses the reaction a ribonucleoside 5'-phosphate + H2O = a ribonucleoside + phosphate. Nucleotidase that shows phosphatase activity on nucleoside 5'-monophosphates. This is 5'-nucleotidase SurE from Wolbachia sp. subsp. Brugia malayi (strain TRS).